The primary structure comprises 711 residues: RB-associated KRAB zinc finger protein (711 aa).

The 72-residue stretch at L8–L79 folds into the KRAB domain. Residues K97 and K256 each participate in a glycyl lysine isopeptide (Lys-Gly) (interchain with G-Cter in SUMO2) cross-link. The required for interaction with RB1 stretch occupies residues A170–P257. 2 C2H2-type zinc fingers span residues F258–H280 and Y286–H308. K312 participates in a covalent cross-link: Glycyl lysine isopeptide (Lys-Gly) (interchain with G-Cter in SUMO2). 6 consecutive C2H2-type zinc fingers follow at residues Y314 to H336, Y342 to H364, Y370 to H392, Y398 to H420, Y426 to H448, and Y454 to H476. A Glycyl lysine isopeptide (Lys-Gly) (interchain with G-Cter in SUMO2) cross-link involves residue K354. Positions I414 to L711 are interaction with AR. A C2H2-type 9; degenerate zinc finger spans residues Y508–P530. Residue K534 forms a Glycyl lysine isopeptide (Lys-Gly) (interchain with G-Cter in SUMO2) linkage. C2H2-type zinc fingers lie at residues Y536–H558, F564–H586, Y592–H614, Y620–H642, Y648–H670, and Y676–H698.

It belongs to the krueppel C2H2-type zinc-finger protein family. Interacts with AR. May also interact with other nuclear hormone receptors such as NR3C1/GR. Interacts with RB1.

It is found in the nucleus. May repress E2F-dependent transcription. May promote AR-dependent transcription. The sequence is that of RB-associated KRAB zinc finger protein (Rbak) from Mus musculus (Mouse).